We begin with the raw amino-acid sequence, 565 residues long: DNA ligase B (565 aa).

The active-site N6-AMP-lysine intermediate is the K130.

This sequence belongs to the NAD-dependent DNA ligase family. LigB subfamily.

It catalyses the reaction NAD(+) + (deoxyribonucleotide)n-3'-hydroxyl + 5'-phospho-(deoxyribonucleotide)m = (deoxyribonucleotide)n+m + AMP + beta-nicotinamide D-nucleotide.. Its function is as follows. Catalyzes the formation of phosphodiester linkages between 5'-phosphoryl and 3'-hydroxyl groups in double-stranded DNA using NAD as a coenzyme and as the energy source for the reaction. The sequence is that of DNA ligase B from Yersinia enterocolitica serotype O:8 / biotype 1B (strain NCTC 13174 / 8081).